The following is a 444-amino-acid chain: tRNA-2-methylthio-N(6)-dimethylallyladenosine synthase (444 aa).

Residues 8–122 (KTFYIETFGC…LAEMLVQIES (115 aa)) form the MTTase N-terminal domain. The [4Fe-4S] cluster site is built by C17, C53, C85, C160, C164, and C167. Positions 146 to 376 (RGNAHRGYIT…MEHQREIQRA (231 aa)) constitute a Radical SAM core domain. The TRAM domain maps to 379 to 444 (RKHIGETIEV…PNSLVGELVG (66 aa)).

Belongs to the methylthiotransferase family. MiaB subfamily. In terms of assembly, monomer. It depends on [4Fe-4S] cluster as a cofactor.

It is found in the cytoplasm. The enzyme catalyses N(6)-dimethylallyladenosine(37) in tRNA + (sulfur carrier)-SH + AH2 + 2 S-adenosyl-L-methionine = 2-methylsulfanyl-N(6)-dimethylallyladenosine(37) in tRNA + (sulfur carrier)-H + 5'-deoxyadenosine + L-methionine + A + S-adenosyl-L-homocysteine + 2 H(+). Its function is as follows. Catalyzes the methylthiolation of N6-(dimethylallyl)adenosine (i(6)A), leading to the formation of 2-methylthio-N6-(dimethylallyl)adenosine (ms(2)i(6)A) at position 37 in tRNAs that read codons beginning with uridine. The protein is tRNA-2-methylthio-N(6)-dimethylallyladenosine synthase of Koribacter versatilis (strain Ellin345).